A 183-amino-acid polypeptide reads, in one-letter code: MNLLEDTLKSCPIVKRGEYNYFIHPITDGVPLMNSQLLREVATKIIKISDMDIDKIVTAEAMGIPIATTISLYTDIPYVIMRKRKYLLEGEIPVHQETGYSKGELYLNGVNKGDKVLIVDDVISTGGTMVAIIKALEKAGAHIKDIVCVIERGNGKEEVKEKTGYDVKTLVKIDVVNGKVVIL.

The protein belongs to the purine/pyrimidine phosphoribosyltransferase family. Archaeal HPRT subfamily. As to quaternary structure, homodimer.

It localises to the cytoplasm. It carries out the reaction IMP + diphosphate = hypoxanthine + 5-phospho-alpha-D-ribose 1-diphosphate. The catalysed reaction is GMP + diphosphate = guanine + 5-phospho-alpha-D-ribose 1-diphosphate. The protein operates within purine metabolism; IMP biosynthesis via salvage pathway; IMP from hypoxanthine: step 1/1. Functionally, catalyzes a salvage reaction resulting in the formation of IMP that is energically less costly than de novo synthesis. The sequence is that of Hypoxanthine/guanine phosphoribosyltransferase from Methanothermococcus okinawensis (strain DSM 14208 / JCM 11175 / IH1).